Reading from the N-terminus, the 490-residue chain is Glycogen synthase kinase-3 alpha (490 aa).

A compositionally biased stretch (gly residues) spans 1–15 (MSGGGPSGGGPGGSG). Residues 1–97 (MSGGGPSGGG…PPGVKLGRDS (97 aa)) form a disordered region. An N-acetylserine modification is found at Ser2. Ser2 bears the Phosphoserine mark. Position 21 is a phosphoserine; by PKB/AKT1 (Ser21). Residues 25-82 (PGGGGGGGGGGPGGSASGPGGTGGGKASVGAMGGGVGASSSGGGPSGSGGGGSGGPGA) are compositionally biased toward gly residues. Ser72, Ser77, and Ser97 each carry phosphoserine. The 286-residue stretch at 119 to 404 (YTDIKVIGNG…PLEACAHSFF (286 aa)) folds into the Protein kinase domain. ATP is bound by residues 125–133 (IGNGSFGVV) and Lys148. Asp244 functions as the Proton acceptor in the catalytic mechanism. Residue Tyr279 is modified to Phosphotyrosine. Positions 451–490 (GPASPLTTSYNPSSQALTEAQTGQDWQPSDATTATLASSS) are disordered. Over residues 455–480 (PLTTSYNPSSQALTEAQTGQDWQPSD) the composition is skewed to polar residues. Residues 481-490 (ATTATLASSS) show a composition bias toward low complexity.

This sequence belongs to the protein kinase superfamily. CMGC Ser/Thr protein kinase family. GSK-3 subfamily. Monomer. Interacts with AXIN1 and CTNNB1/beta-catenin. Interacts with ARRB2. Interacts with CTNND2. Interacts with LMBR1L. Interacts with DDX3X. Interacts with TNFRSF10B. Phosphorylated by AKT1 at Ser-21: upon insulin-mediated signaling, the activated PKB/AKT1 protein kinase phosphorylates and deactivates GSK3A, resulting in the dephosphorylation and activation of GYS1. Activated by phosphorylation at Tyr-279.

The catalysed reaction is L-seryl-[tau protein] + ATP = O-phospho-L-seryl-[tau protein] + ADP + H(+). It catalyses the reaction L-threonyl-[tau protein] + ATP = O-phospho-L-threonyl-[tau protein] + ADP + H(+). It carries out the reaction L-seryl-[protein] + ATP = O-phospho-L-seryl-[protein] + ADP + H(+). The enzyme catalyses L-threonyl-[protein] + ATP = O-phospho-L-threonyl-[protein] + ADP + H(+). With respect to regulation, activated by phosphorylation at Tyr-279. In response to insulin, inhibited by phosphorylation at Ser-21 by PKB/AKT1; phosphorylation at this site causes a conformational change, preventing access of substrates to the active site. Inhibited by lithium. Constitutively active protein kinase that acts as a negative regulator in the hormonal control of glucose homeostasis, Wnt signaling and regulation of transcription factors and microtubules, by phosphorylating and inactivating glycogen synthase (GYS1 or GYS2), CTNNB1/beta-catenin, APC and AXIN1. Requires primed phosphorylation of the majority of its substrates. Contributes to insulin regulation of glycogen synthesis by phosphorylating and inhibiting GYS1 activity and hence glycogen synthesis. Regulates glycogen metabolism in liver, but not in muscle. May also mediate the development of insulin resistance by regulating activation of transcription factors. In Wnt signaling, regulates the level and transcriptional activity of nuclear CTNNB1/beta-catenin. Facilitates amyloid precursor protein (APP) processing and the generation of APP-derived amyloid plaques found in Alzheimer disease. May be involved in the regulation of replication in pancreatic beta-cells. Is necessary for the establishment of neuronal polarity and axon outgrowth. Through phosphorylation of the anti-apoptotic protein MCL1, may control cell apoptosis in response to growth factors deprivation. Acts as a regulator of autophagy by mediating phosphorylation of KAT5/TIP60 under starvation conditions, activating KAT5/TIP60 acetyltransferase activity and promoting acetylation of key autophagy regulators, such as ULK1 and RUBCNL/Pacer. Negatively regulates extrinsic apoptotic signaling pathway via death domain receptors. Promotes the formation of an anti-apoptotic complex, made of DDX3X, BRIC2 and GSK3B, at death receptors, including TNFRSF10B. The anti-apoptotic function is most effective with weak apoptotic signals and can be overcome by stronger stimulation. This Mus musculus (Mouse) protein is Glycogen synthase kinase-3 alpha (Gsk3a).